The following is a 688-amino-acid chain: Pentatricopeptide repeat-containing protein At3g18020 (688 aa).

PPR repeat units lie at residues 53-88, 89-123, 124-158, 161-195, 196-230, 231-261, 271-305, 306-340, 341-375, 376-406, 411-445, 446-480, 482-517, 518-552, 553-583, 588-622, and 623-657; these read DRAYWRRRIHSICAVRRNPDEALRILDGLCLRGYRP, DSLNLSSVIHSLCDAGRFDEAHRRFLLFLASGFIP, DERTCNVIIARLLYSRSPVSTLGVIHRLIGFKKEF, SLTNYNRLMNQLCTIYRVIDAHKLVFDMRNRGHLP, DVVTFTTLIGGYCEIRELEVAHKVFDEMRVCGIRP, NSLTLSVLIGGFLKMRDVETGRKLMKELWEY, KAAAFANLVDSMCREGYFNDIFEIAENMSLCESVN, VEFAYGHMIDSLCRYRRNHGAARIVYIMKSKGLKP, RRTSYNAIIHGLCKDGGCMRAYQLLEEGSEFEFFP, SEYTYKLLMESLCKELDTGKARNVLELMLRK, RTRIYNIYLRGLCVMDNPTEILNVLVSMLQGDCRP, DEYTLNTVINGLCKMGRVDDAMKVLDDMMTGKFCA, DAVTLNTVMCGLLAQGRAEEALDVLNRVMPENKIKP, GVVAYNAVIRGLFKLHKGDEAMSVFGQLEKASVTA, DSTTYAIIIDGLCVTNKVDMAKKFWDDVIWP, DAFVYAAFLKGLCQSGYLSDACHFLYDLADSGAIP, and NVVCYNTVIAECSRSGLKREAYQILEEMRKNGQAP.

Belongs to the PPR family. P subfamily.

The chain is Pentatricopeptide repeat-containing protein At3g18020 from Arabidopsis thaliana (Mouse-ear cress).